The following is a 101-amino-acid chain: MIIVYISLAVLAVSIIFLGVTVIQNKKKIDPALKELSSVTQAMQKQIEGLKTETELLTQKQKKIQQDVQIKKYTLQQTAAEVKEVPQAVKEVWQAGHFNSR.

This is an uncharacterized protein from Bacillus subtilis (strain 168).